A 131-amino-acid chain; its full sequence is Peptide methionine sulfoxide reductase MsrB (131 aa).

A MsrB domain is found at 8–130 (LEEWRAMLDP…NSVCLDLVPR (123 aa)). Residues cysteine 47, cysteine 50, cysteine 96, and cysteine 99 each coordinate Zn(2+). The active-site Nucleophile is the cysteine 119.

The protein belongs to the MsrB Met sulfoxide reductase family. Zn(2+) serves as cofactor.

It catalyses the reaction L-methionyl-[protein] + [thioredoxin]-disulfide + H2O = L-methionyl-(R)-S-oxide-[protein] + [thioredoxin]-dithiol. The protein is Peptide methionine sulfoxide reductase MsrB of Pseudomonas fluorescens (strain Pf0-1).